Reading from the N-terminus, the 543-residue chain is MSRQSTITFQTSSRRGFSTASATTPATSRSRFSSASVTHSPAGSGGLGRISGFGSRSLYNLGGTKRVSISGCGSNFRSGFGGRASSGFGVSGGFGYGGGIGGGHGGCGFSVCPPGGIQEVTVNQSLLTPLNLQIDPNIQRVRKEEREQIKTLNNKFASFIDKVRFLEQQNKVLETKWSLLQEQGTRTVRQSLEPFFEAYITDLRRQLDSITTERGRLDAELRTMQDVVEDFKVRYEDEINKRTAAENEFVALKKDVDAAYLNKVDLEAKANSLTDEINFLQMLFEAELCQMQTRVSDTSVVLSMDNNRSLDLDSIIAEVKAQYEEIANRSRAEAESWYQTKYEELQVTAGQHGDDLRNTKQEISETNRMIQRLRAEIDNVKKQCASLQTAIADAEQRGELALKDARAKLVDLEEALQKSKQDMARLLREYQELMNIKLALDVEIATYRKLLEGEECRLSGEGVSPVNISVVTSTVSSGYGGGSSIGSGSLGLSGGSGCSFMTSGGHSLGGSSFSNSSSRGLGGSGSSFKFVSTTSSSRKSYKH.

A compositionally biased stretch (polar residues) spans 1-16 (MSRQSTITFQTSSRRG). Residues 1–48 (MSRQSTITFQTSSRRGFSTASATTPATSRSRFSSASVTHSPAGSGGLG) form a disordered region. The head stretch occupies residues 1–144 (MSRQSTITFQ…DPNIQRVRKE (144 aa)). The span at 17-36 (FSTASATTPATSRSRFSSAS) shows a compositional bias: low complexity. A coil 1A region spans residues 145 to 180 (EREQIKTLNNKFASFIDKVRFLEQQNKVLETKWSLL). An IF rod domain is found at 145–458 (EREQIKTLNN…KLLEGEECRL (314 aa)). A linker 1 region spans residues 181-199 (QEQGTRTVRQSLEPFFEAY). Positions 200 to 292 (ITDLRRQLDS…LFEAELCQMQ (93 aa)) are coil 1B. Residues 293–315 (TRVSDTSVVLSMDNNRSLDLDSI) form a linker 12 region. Positions 316-454 (IAEVKAQYEE…ATYRKLLEGE (139 aa)) are coil 2. The interval 455–543 (ECRLSGEGVS…TSSSRKSYKH (89 aa)) is tail. The disordered stretch occupies residues 511-543 (SSFSNSSSRGLGGSGSSFKFVSTTSSSRKSYKH). Residues 526-543 (SSFKFVSTTSSSRKSYKH) show a composition bias toward low complexity.

The protein belongs to the intermediate filament family. In terms of assembly, heterodimer of a type I and a type II keratin. May associate with KRT17.

In terms of biological role, plays a central role in hair and nail formation. Essential component of keratin intermediate filaments in the companion layer of the hair follicle. This Bos taurus (Bovine) protein is Keratin, type II cytoskeletal 75 (KRT75).